A 918-amino-acid chain; its full sequence is UPF0182 protein CPR_0011 (918 aa).

7 helical membrane-spanning segments follow: residues 8–28, 46–66, 91–111, 151–171, 200–220, 243–263, and 271–291; these read TVLISILLLVVVFFVSTNFII, LIAICKLFVPIFILYFCVIAI, FLLSNLVISILGAGATATTQW, AISLIIILVLITVIIYLALGF, LAVLASVLSLLIGCSYLLKSY, IFYKVIAIACVISSIVVFISI, and IIISIASIAVLIVLEPVVAIF.

Belongs to the UPF0182 family.

Its subcellular location is the cell membrane. This Clostridium perfringens (strain SM101 / Type A) protein is UPF0182 protein CPR_0011.